The primary structure comprises 547 residues: Glucose-6-phosphate isomerase (547 aa).

The active-site Proton donor is glutamate 351. Active-site residues include histidine 382 and lysine 510.

This sequence belongs to the GPI family.

The protein resides in the cytoplasm. It carries out the reaction alpha-D-glucose 6-phosphate = beta-D-fructose 6-phosphate. It participates in carbohydrate biosynthesis; gluconeogenesis. Its pathway is carbohydrate degradation; glycolysis; D-glyceraldehyde 3-phosphate and glycerone phosphate from D-glucose: step 2/4. Its function is as follows. Catalyzes the reversible isomerization of glucose-6-phosphate to fructose-6-phosphate. This is Glucose-6-phosphate isomerase from Beijerinckia indica subsp. indica (strain ATCC 9039 / DSM 1715 / NCIMB 8712).